Reading from the N-terminus, the 790-residue chain is Cadherin-6 (790 aa).

Positions 1-18 (MRTYRYFLLLFWVGQPYP) are cleaved as a signal peptide. A propeptide spanning residues 19–53 (TFSTPLSKRTSGFPAKKRTLELSGNSKNELSRSKR) is cleaved from the precursor. 5 Cadherin domains span residues 54 to 159 (SWMW…EPIF), 160 to 268 (TKEV…PPRF), 269 to 383 (PQST…PPVF), 384 to 486 (SKLA…DNPP), and 487 to 608 (EFAE…LVHP). The Extracellular segment spans residues 54-615 (SWMWNQFFLL…VHPTGLSTGA (562 aa)). An N-linked (GlcNAc...) asparagine glycan is attached at Asn-255. Residues 261 to 291 (VNDNPPRFPQSTYQFKTPESSPPGTPIGRIK) form a disordered region. Residues 269 to 279 (PQSTYQFKTPE) are compositionally biased toward polar residues. Residues Asn-399, Asn-437, Asn-455, and Asn-536 are each glycosylated (N-linked (GlcNAc...) asparagine). The helical transmembrane segment at 616–636 (LIAILLCIVTLLVTVVLFAAL) threads the bilayer. At 637-790 (RRQRKKEPLI…YGGVDSDKDS (154 aa)) the chain is on the cytoplasmic side. Phosphoserine occurs at positions 786 and 790.

Its subcellular location is the cell membrane. Its function is as follows. Cadherins are calcium-dependent cell adhesion proteins. They preferentially interact with themselves in a homophilic manner in connecting cells; cadherins may thus contribute to the sorting of heterogeneous cell types. The protein is Cadherin-6 (CDH6) of Bos taurus (Bovine).